A 349-amino-acid chain; its full sequence is Nuclear distribution protein nudE homolog 1 (349 aa).

A coiled-coil region spans residues 23 to 189; sequence AMKYKTCSEE…ELAVQQKQEK (167 aa). Positions 182-201 are disordered; sequence AVQQKQEKPKSNMGSPETER.

Belongs to the nudE family. Self-associates. Interacts with pafah1b1. In terms of processing, phosphorylated in mitosis.

It localises to the cytoplasm. It is found in the cytoskeleton. The protein localises to the microtubule organizing center. The protein resides in the centrosome. Its subcellular location is the spindle. It localises to the chromosome. It is found in the centromere. The protein localises to the kinetochore. The protein resides in the cleavage furrow. Its subcellular location is the cytoplasmic vesicle membrane. In terms of biological role, required for centrosome duplication and formation and function of the mitotic spindle. The chain is Nuclear distribution protein nudE homolog 1 (nde1) from Xenopus tropicalis (Western clawed frog).